The chain runs to 283 residues: CASP-like protein 4A3 (283 aa).

Residues 1–86 (MRSPAKTMPS…VEETPSPIVV (86 aa)) are disordered. The Cytoplasmic portion of the chain corresponds to 1-135 (MRSPAKTMPS…SRREEVVKFS (135 aa)). Residues 9-20 (PSMSPSSVSTEK) show a composition bias toward low complexity. A compositionally biased stretch (basic and acidic residues) spans 50-79 (SLDHSSESEKEDAKSKPESRRNKNPGKVEE). The helical transmembrane segment at 136-156 (ALGFRLSEVVLALISFSIMAA) threads the bilayer. Residues 157–174 (DKTKGWSGDSFDRYKEYR) lie on the Extracellular side of the membrane. A helical membrane pass occupies residues 175-195 (FCLSVNVVAFVYSSFQACDLA). Residues 196 to 212 (YHLVKEKHLISHHLRPL) lie on the Cytoplasmic side of the membrane. A helical membrane pass occupies residues 213-233 (FEFIIDQVLAYLLMSASTAAV). Over 234-251 (TRVDDWVSNWGKDEFTEM) the chain is Extracellular. Residues 252–272 (ASASIAMSFLAFLAFAFSSLI) traverse the membrane as a helical segment. Over 273 to 283 (SGYNLFNQGSL) the chain is Cytoplasmic.

The protein belongs to the Casparian strip membrane proteins (CASP) family. Homodimer and heterodimers.

It is found in the cell membrane. In Arabidopsis thaliana (Mouse-ear cress), this protein is CASP-like protein 4A3.